A 442-amino-acid chain; its full sequence is Elongation factor 1-gamma (442 aa).

The GST N-terminal domain occupies 2–87; it reads AAGTLYTYPE…YLSNDVLRGS (86 aa). Positions 88-216 constitute a GST C-terminal domain; that stretch reads TPQASAQVLQ…VKLCEKMAQF (129 aa). 2 stretches are compositionally biased toward basic and acidic residues: residues 227 to 242 and 249 to 263; these read KKEA…KEGG and QEKK…KAAP. The disordered stretch occupies residues 227 to 273; it reads KKEAPIKKEKGGKEGGKQQPQQQEKKEKKKEEKKAAPAEEEMDECEA. Positions 281–442 constitute an EF-1-gamma C-terminal domain; it reads AKDPFAHLPK…KPFNQGKIFK (162 aa).

In terms of assembly, EF-1 is composed of four subunits: alpha, beta, delta, and gamma.

Its function is as follows. Probably plays a role in anchoring the complex to other cellular components. This is Elongation factor 1-gamma (eef1g) from Danio rerio (Zebrafish).